A 28-amino-acid chain; its full sequence is Aryl acylamidase (28 aa).

In terms of assembly, homodimer.

It catalyses the reaction an anilide + H2O = aniline + a carboxylate + H(+). The protein is Aryl acylamidase of Nocardia globerula.